A 463-amino-acid polypeptide reads, in one-letter code: Glutamate--tRNA ligase 1 (463 aa).

The 'HIGH' region signature appears at 10-20 (PSPTGYLHIGG). Positions 238–242 (KLSKR) match the 'KMSKS' region motif. K241 provides a ligand contact to ATP.

It belongs to the class-I aminoacyl-tRNA synthetase family. Glutamate--tRNA ligase type 1 subfamily. Monomer.

It is found in the cytoplasm. The enzyme catalyses tRNA(Glu) + L-glutamate + ATP = L-glutamyl-tRNA(Glu) + AMP + diphosphate. Catalyzes the attachment of glutamate to tRNA(Glu) in a two-step reaction: glutamate is first activated by ATP to form Glu-AMP and then transferred to the acceptor end of tRNA(Glu). The protein is Glutamate--tRNA ligase 1 of Helicobacter pylori (strain J99 / ATCC 700824) (Campylobacter pylori J99).